Here is a 2238-residue protein sequence, read N- to C-terminus: RNA-directed RNA polymerase L (2238 aa).

The segment at 26–284 is endonuclease; it reads ITLVTCQNDA…THHSEHPVDC (259 aa). The Mn(2+) site is built by Glu-51, Asp-89, and Glu-102. Residue Lys-115 is part of the active site. In terms of domain architecture, RdRp catalytic spans 1188–1387; that stretch reads TDMKMCVNLG…FISTKFNKFV (200 aa). Asp-1346 provides a ligand contact to Mg(2+).

Belongs to the Bunyavirales RNA polymerase family. As to quaternary structure, homomultimer; the oligomeric structure is essential for the polymerase activity. Interacts with nucleoprotein N. Interacts with protein Z; this interaction inhibits viral transcription and replication, Z partially blocks the product exit tunnel for the releasing nascent RNA product. Mn(2+) serves as cofactor. The cofactor is Mg(2+).

The protein resides in the virion. The protein localises to the host cytoplasm. The catalysed reaction is RNA(n) + a ribonucleoside 5'-triphosphate = RNA(n+1) + diphosphate. Functionally, RNA-dependent RNA polymerase, which is responsible for the replication and transcription of the viral RNA genome using antigenomic RNA as an intermediate. During transcription, synthesizes subgenomic RNAs and assures their capping by a cap-snatching mechanism, which involves the endonuclease activity cleaving the host capped pre-mRNAs. These short capped RNAs are then used as primers for viral transcription. The 3'-end of subgenomic mRNAs molecules are heterogeneous and not polyadenylated. The replicase function is to direct synthesis of antigenomic and genomic RNA which are encapsidated and non capped. As a consequence of the use of the same enzyme for both transcription and replication, these mechanisms need to be well coordinated. These processes may be regulated by proteins N and Z in a dose-dependent manner. Z protein inhibits the viral polymerase L und thus the viral transcription and RNA synthesis. This is RNA-directed RNA polymerase L from Calomys callosus (Large vesper mouse).